Consider the following 279-residue polypeptide: Tryptophan 2,3-dioxygenase (279 aa).

Substrate-binding positions include 48–52 (FIIQH), Tyr-110, and Arg-114. Residue His-237 coordinates heme. Residue Thr-251 participates in substrate binding.

This sequence belongs to the tryptophan 2,3-dioxygenase family. As to quaternary structure, homotetramer. Heme serves as cofactor.

It catalyses the reaction L-tryptophan + O2 = N-formyl-L-kynurenine. It functions in the pathway amino-acid degradation; L-tryptophan degradation via kynurenine pathway; L-kynurenine from L-tryptophan: step 1/2. In terms of biological role, heme-dependent dioxygenase that catalyzes the oxidative cleavage of the L-tryptophan (L-Trp) pyrrole ring and converts L-tryptophan to N-formyl-L-kynurenine. Catalyzes the oxidative cleavage of the indole moiety. This Ruegeria sp. (strain TM1040) (Silicibacter sp.) protein is Tryptophan 2,3-dioxygenase.